The sequence spans 509 residues: Heat shock 70 kDa protein 14 (509 aa).

It belongs to the heat shock protein 70 family. As to quaternary structure, component of ribosome-associated complex (RAC), a heterodimer composed of Hsp70/DnaK-type chaperone HSPA14 and Hsp40/DnaJ-type chaperone DNAJC2.

The protein localises to the cytoplasm. Its subcellular location is the cytosol. In terms of biological role, component of the ribosome-associated complex (RAC), a complex involved in folding or maintaining nascent polypeptides in a folding-competent state. In the RAC complex, binds to the nascent polypeptide chain, while DNAJC2 stimulates its ATPase activity. This is Heat shock 70 kDa protein 14 (Hspa14) from Rattus norvegicus (Rat).